The following is a 299-amino-acid chain: DNA-binding transcriptional activator HetR (299 aa).

The segment at 1 to 98 (MSNDIDLIKR…GKLLKTLGSQ (98 aa)) is DNA-binding domain. Residues 34–40 (RHGAFLD) and 60–76 (NLRM…KRVK) each bind DNA. The tract at residues 99 to 216 (EPRYLIQFPY…FYALTRPFYA (118 aa)) is flap domain. Ser152 is an active-site residue. 179–181 (SEA) is a DNA binding site. The interval 217-299 (PADDQERTYI…LQMVFGRKED (83 aa)) is hood domain.

This sequence belongs to the peptidase S48 family. In terms of assembly, upon expression in E.coli most protein is monomeric, although varying amounts of homodimer can be seen. Homodimer; disulfide-linked. Homodimer. Binds the 6 residue C-terminal peptide of PatS; one peptide binds to each subunit. In bacterial two-hybrid assays interacts robustly with itself, Alr2902 and Alr3234 and more weakly with Als1930. In terms of processing, probably autodegrades.

Its activity is regulated as follows. Protease activity is inhibited by PMSF, suggesting this is a serine protease. Controls heterocyst differentiation. Dimerization is required for DNA-binding. Has both a protease and a DNA-binding activity. Functionally, controls heterocyst differentiation; increased expression leads to more heterocysts than usual. Has protease activity. Binds the promoter regions of hetR, hepA and patS and is required for their expression. Dimerization is required for DNA-binding, DNA-binding is inhibited by the PatS6 peptide. Binds the inverted repeat 5'-GTAGGCGAGGGGTCTAACCCCTCATTACC-3' found in the hetP promoter, required for expression of hetP. The sequence is that of DNA-binding transcriptional activator HetR from Nostoc sp. (strain PCC 7120 / SAG 25.82 / UTEX 2576).